The following is a 113-amino-acid chain: Tachykinin-4 (113 aa).

The signal sequence occupies residues 1-20; that stretch reads MLPCLALLLLMELSVCTVAG. M67 carries the post-translational modification Methionine amide. Positions 71-79 are excised as a propeptide; it reads VGGRPLIQP. L95 is subject to Leucine amide. Positions 98-113 are excised as a propeptide; it reads RSLFTEGREDEAQGSE.

It belongs to the tachykinin family. As to expression, expressed at low levels in the uterus of both pregnant and non-pregnant women. Isoform 1 is found only in the adrenal gland and fetal liver. Isoform 2 is found in heart, liver, bone marrow, prostate, adrenal gland and testis. Isoform 3 and isoform 4 are expressed predominantly in adrenal gland and placenta.

Its subcellular location is the secreted. Functionally, tachykinins are active peptides which excite neurons, evoke behavioral responses, are potent vasodilators and secretagogues, and contract (directly or indirectly) many smooth muscles. Endokinin-A induces thermal hyperalgesia and pain-related behavior such as scratching following intrathecal administration in rats. These effects are suppressed by treatment with endokinin-C. Endokinin-A/B reduces arterial blood pressure and increases sperm motility. The polypeptide is Tachykinin-4 (Homo sapiens (Human)).